The sequence spans 730 residues: MQDDPENSKLYDLLNSHLDVHGRSNEEPRQTGDSRSQSSGNTGENEEDIAFASGLNGGTFDSMLEALPDDLYFTDFVSPFTAAATTSVTTKTVKDTTPATNHMDDDIAMFDSLATTQPIDIAASNQQNGEIAQLWDFNVDQFNMTPSNSSGSATISAPNSFTSDIPQYNHGSLGNSVSKSSLFPYNSSTSNSNINQPSINNNSNTNAQSHHSFNIYKLQNNNSSSSAMNITNNNNSNNSNIQHPFLKKSDSIGLSSSNTTNSVRKNSLIKPMSSTSLANFKRAASVSSSISNMEPSGQNKKPLIQCFNCKTFKTPLWRRSPEGNTLCNACGLFQKLHGTMRPLSLKSDVIKKRISKKRAKQTDPNIAQNTPSAPATASTSVTTTNAKPIRSRKKSLQQNSLSRVIPEEIIRDNIGNTNNILNVNRGGYNFNSVPSPVLMNSQSYNSSNANFNGASNANLNSNNLMRHNSNTVTPNFRRSSRRSSTSSNTSSSSKSSSRSVVPILPKPSPNSANSQQFNMNMNLMNTTNNVSAGNSVASSPRIISSANFNSNSPLQQNLLSNSFQRQGMNIPRRKMSRNASYSSSFMAASLQQLHEQQQVDVNSNTNTNSNRQNWNSSNSVSTNSRSSNFVSQKPNFDIFNTPVDSPSVSRPSSRKSHTSLLSQQLQNSESNSFISNHKFNNRLSSDSTSPIKYEADVSAGGKISEDNSTKGSSKESSAIADELDWLKFGI.

Positions 1–45 (MQDDPENSKLYDLLNSHLDVHGRSNEEPRQTGDSRSQSSGNTGEN) are disordered. A compositionally biased stretch (basic and acidic residues) spans 18–32 (LDVHGRSNEEPRQTG). A compositionally biased stretch (polar residues) spans 33–43 (DSRSQSSGNTG). The short motif at 129–137 (GEIAQLWDF) is the 9aaTAD element. Disordered stretches follow at residues 187-208 (SSTSNSNINQPSINNNSNTNAQ) and 224-262 (SSSAMNITNNNNSNNSNIQHPFLKKSDSIGLSSSNTTNS). A compositionally biased stretch (low complexity) spans 224–240 (SSSAMNITNNNNSNNSN). Phosphoserine is present on Ser251. Positions 252-262 (IGLSSSNTTNS) are enriched in polar residues. Residues Ser267 and Ser285 each carry the phosphoserine modification. Residues 306–330 (CFNCKTFKTPLWRRSPEGNTLCNAC) form a GATA-type zinc finger. Disordered stretches follow at residues 355–398 (SKKR…SLQQ) and 449–516 (ANFN…NSQQ). Low complexity-rich tracts occupy residues 370 to 384 (TPSAPATASTSVTTT), 449 to 470 (ANFNGASNANLNSNNLMRHNSN), and 482 to 499 (RSSTSSNTSSSSKSSSRS). Phosphoserine is present on Ser469. Residues Ser552 and Ser562 each carry the phosphoserine modification. Disordered regions lie at residues 593-673 (LHEQ…SNSF) and 696-717 (DVSAGGKISEDNSTKGSSKESS). 3 stretches are compositionally biased toward low complexity: residues 596–631 (QQQVDVNSNTNTNSNRQNWNSSNSVSTNSRSSNFVS), 641–651 (TPVDSPSVSRP), and 658–672 (TSLLSQQLQNSESNS).

The protein localises to the nucleus. Positive nitrogen regulatory protein. Required for the activation of transcription of a number of genes (including the allantoin pathway genes) in response to the replacement of glutamine by glutamate as source of nitrogen. Binds the nitrogen upstream activation sequence of GLN1, the gene encoding glutamine synthetase. URE2 may catalytically inactivate GLN3 in response to an increase in the intracellular concentration of glutamine. The sequence is that of Nitrogen regulatory protein GLN3 (GLN3) from Saccharomyces cerevisiae (strain ATCC 204508 / S288c) (Baker's yeast).